The chain runs to 436 residues: Zinc finger protein 101 (436 aa).

The KRAB domain occupies 4-82 (VAFEDVAVNF…RKEGNEHRET (79 aa)). The C2H2-type 1 zinc-finger motif lies at 102–124 (CKCSVCGKVFLRHSFLDRHMRAH). Residues 128–141 (KRSECGGEWRETPR) show a composition bias toward basic and acidic residues. The interval 128 to 164 (KRSECGGEWRETPRKQKQHGKASISPSSGARRTVTPT) is disordered. Residues 151–163 (ISPSSGARRTVTP) show a composition bias toward polar residues. Residues 169–191 (YECKVCGKAFNSPNLFQIHQRTH) form a C2H2-type 2 zinc finger. The C2H2-type 3; degenerate zinc finger occupies 197–219 (YKCREIVRAFTVSSFFRKHGKMH). 7 C2H2-type zinc fingers span residues 225–247 (YECK…VRTH), 253–276 (YKCK…IRSH), 282–304 (HQCQ…ERTH), 310–332 (YECQ…ERAH), 338–360 (YECN…KKTH), 366–388 (YECT…EMTH), and 394–416 (FDCK…ERTH).

This sequence belongs to the krueppel C2H2-type zinc-finger protein family. Expressed in a variety of adult and fetal tissues.

Its subcellular location is the nucleus. Functionally, may be involved in transcriptional regulation. The protein is Zinc finger protein 101 (ZNF101) of Homo sapiens (Human).